The primary structure comprises 373 residues: Galactoside alpha-(1,2)-fucosyltransferase 1 (373 aa).

Over 1–12 (MWPPSRRQLCLA) the chain is Cytoplasmic. A helical; Signal-anchor for type II membrane protein transmembrane segment spans residues 13–29 (FLLVCALSAFSFLLHLH). The Lumenal portion of the chain corresponds to 30–373 (QDLFRNGLAL…GSWRPWRFLG (344 aa)). Asparagine 66, asparagine 301, and asparagine 327 each carry an N-linked (GlcNAc...) asparagine glycan.

It belongs to the glycosyltransferase 11 family. As to expression, brain.

It localises to the golgi apparatus. Its subcellular location is the golgi stack membrane. The enzyme catalyses a beta-D-galactosyl-(1-&gt;4)-N-acetyl-beta-D-glucosaminyl derivative + GDP-beta-L-fucose = an alpha-L-Fuc-(1-&gt;2)-beta-D-Gal-(1-&gt;4)-beta-D-GlcNAc derivative + GDP + H(+). It carries out the reaction a ganglioside GA1 + GDP-beta-L-fucose = a ganglioside Fuc-GA1 + GDP + H(+). The catalysed reaction is a beta-D-Gal-(1-&gt;3)-beta-D-GlcNAc-(1-&gt;3)-beta-D-Gal-(1-&gt;4)-beta-D-Glc-(1&lt;-&gt;1')-Cer(d18:1(4E)) + GDP-beta-L-fucose = alpha-L-fucosyl-(1-&gt;2)- beta-D-galactosyl-(1-&gt;3)-N-acetyl-beta-D-glucosaminyl-(1-&gt;3)-beta-D-galactosyl-(1-&gt;4)-beta-D-glucosyl-(1&lt;-&gt;1')-N-acylsphing-4-enine + GDP + H(+). It catalyses the reaction a neolactoside nLc4Cer(d18:1(4E)) + GDP-beta-L-fucose = a neolactoside IV(2)-alpha-Fuc-nLc4Cer(d18:1(4E)) + GDP + H(+). The enzyme catalyses a ganglioside GM1 + GDP-beta-L-fucose = a ganglioside Fuc-GM1 + GDP + H(+). It carries out the reaction beta-D-galactosyl-(1-&gt;3)-N-acetyl-D-galactosamine + GDP-beta-L-fucose = alpha-L-fucosyl-(1-&gt;2)-beta-D-galactosyl-(1-&gt;3)-N-acetyl-D-galactosamine + GDP + H(+). It functions in the pathway protein modification; protein glycosylation. Functionally, catalyzes the transfer of L-fucose, from a guanosine diphosphate-beta-L-fucose, to the terminal galactose residue of glycoconjugates through an alpha(1,2) linkage leading to H antigen synthesis that is an intermediate substrate in the synthesis of ABO blood group antigens. H antigen is essential for maturation of the glomerular layer of the main olfactory bulb, in cell migration and early cell-cell contacts during tumor associated angiogenesis. Preferentially fucosylates soluble lactose and to a lesser extent fucosylates glycolipids gangliosides GA1 and GM1a. The protein is Galactoside alpha-(1,2)-fucosyltransferase 1 of Oryctolagus cuniculus (Rabbit).